A 240-amino-acid chain; its full sequence is Ribonuclease PH (240 aa).

Phosphate is bound by residues arginine 87 and 125–127; that span reads GTR.

The protein belongs to the RNase PH family. Homohexameric ring arranged as a trimer of dimers.

It carries out the reaction tRNA(n+1) + phosphate = tRNA(n) + a ribonucleoside 5'-diphosphate. Functionally, phosphorolytic 3'-5' exoribonuclease that plays an important role in tRNA 3'-end maturation. Removes nucleotide residues following the 3'-CCA terminus of tRNAs; can also add nucleotides to the ends of RNA molecules by using nucleoside diphosphates as substrates, but this may not be physiologically important. Probably plays a role in initiation of 16S rRNA degradation (leading to ribosome degradation) during starvation. The chain is Ribonuclease PH from Dictyoglomus turgidum (strain DSM 6724 / Z-1310).